The chain runs to 475 residues: Sulfate adenylyltransferase subunit 1 (475 aa).

Residues 25–239 (KSLLRFLTCG…EVLETVEIQR (215 aa)) enclose the tr-type G domain. The tract at residues 34 to 41 (GSVDDGKS) is G1. 34-41 (GSVDDGKS) lines the GTP pocket. The G2 stretch occupies residues 92–96 (GITID). The segment at 113 to 116 (DTPG) is G3. Residues 113 to 117 (DTPGH) and 168 to 171 (NKMD) each bind GTP. The tract at residues 168-171 (NKMD) is G4. Residues 206 to 208 (SAL) form a G5 region.

The protein belongs to the TRAFAC class translation factor GTPase superfamily. Classic translation factor GTPase family. CysN/NodQ subfamily. As to quaternary structure, heterodimer composed of CysD, the smaller subunit, and CysN.

It carries out the reaction sulfate + ATP + H(+) = adenosine 5'-phosphosulfate + diphosphate. It functions in the pathway sulfur metabolism; hydrogen sulfide biosynthesis; sulfite from sulfate: step 1/3. Its function is as follows. With CysD forms the ATP sulfurylase (ATPS) that catalyzes the adenylation of sulfate producing adenosine 5'-phosphosulfate (APS) and diphosphate, the first enzymatic step in sulfur assimilation pathway. APS synthesis involves the formation of a high-energy phosphoric-sulfuric acid anhydride bond driven by GTP hydrolysis by CysN coupled to ATP hydrolysis by CysD. The protein is Sulfate adenylyltransferase subunit 1 of Escherichia coli O9:H4 (strain HS).